Reading from the N-terminus, the 320-residue chain is ATP-dependent 6-phosphofructokinase (320 aa).

Glycine 12 lines the ATP pocket. 22 to 26 (RGVVR) contributes to the ADP binding site. ATP contacts are provided by residues 73–74 (RF) and 103–106 (GDGS). Aspartate 104 is a binding site for Mg(2+). 126–128 (TID) contacts substrate. Residue aspartate 128 is the Proton acceptor of the active site. Arginine 155 serves as a coordination point for ADP. Substrate contacts are provided by residues arginine 163 and 170-172 (MGR). Residues 186 to 188 (GCE), lysine 212, and 214 to 216 (KKH) each bind ADP. Substrate is bound by residues glutamate 223, arginine 244, and 250–253 (HIQR).

The protein belongs to the phosphofructokinase type A (PFKA) family. ATP-dependent PFK group I subfamily. Prokaryotic clade 'B1' sub-subfamily. As to quaternary structure, homotetramer. The cofactor is Mg(2+).

The protein localises to the cytoplasm. The enzyme catalyses beta-D-fructose 6-phosphate + ATP = beta-D-fructose 1,6-bisphosphate + ADP + H(+). It functions in the pathway carbohydrate degradation; glycolysis; D-glyceraldehyde 3-phosphate and glycerone phosphate from D-glucose: step 3/4. Allosterically activated by ADP and other diphosphonucleosides, and allosterically inhibited by phosphoenolpyruvate. Functionally, catalyzes the phosphorylation of D-fructose 6-phosphate to fructose 1,6-bisphosphate by ATP, the first committing step of glycolysis. In Photobacterium profundum (strain SS9), this protein is ATP-dependent 6-phosphofructokinase.